A 33-amino-acid polypeptide reads, in one-letter code: pyr operon leader peptide (33 aa).

The sequence is that of pyr operon leader peptide (pyrL) from Salmonella typhi.